The primary structure comprises 354 residues: GTPase Obg (354 aa).

The 159-residue stretch at 1 to 159 folds into the Obg domain; sequence MQFIDHAEIE…KQLRLELKLL (159 aa). Residues 160–328 form the OBG-type G domain; the sequence is AEVGIIGLPN…LLQEIWDVLD (169 aa). GTP-binding positions include 166 to 173, 191 to 195, 213 to 216, 280 to 283, and 309 to 311; these read GLPNAGKS, FTTLI, DIPG, NKLD, and SAV. Mg(2+)-binding residues include S173 and T193.

The protein belongs to the TRAFAC class OBG-HflX-like GTPase superfamily. OBG GTPase family. As to quaternary structure, monomer. Mg(2+) serves as cofactor.

It is found in the cytoplasm. Its function is as follows. An essential GTPase which binds GTP, GDP and possibly (p)ppGpp with moderate affinity, with high nucleotide exchange rates and a fairly low GTP hydrolysis rate. Plays a role in control of the cell cycle, stress response, ribosome biogenesis and in those bacteria that undergo differentiation, in morphogenesis control. The chain is GTPase Obg from Picosynechococcus sp. (strain ATCC 27264 / PCC 7002 / PR-6) (Agmenellum quadruplicatum).